We begin with the raw amino-acid sequence, 442 residues long: Proline--tRNA ligase (442 aa).

This sequence belongs to the class-II aminoacyl-tRNA synthetase family. ProS type 2 subfamily. Homodimer.

Its subcellular location is the cytoplasm. The enzyme catalyses tRNA(Pro) + L-proline + ATP = L-prolyl-tRNA(Pro) + AMP + diphosphate. Catalyzes the attachment of proline to tRNA(Pro) in a two-step reaction: proline is first activated by ATP to form Pro-AMP and then transferred to the acceptor end of tRNA(Pro). The polypeptide is Proline--tRNA ligase (Brucella anthropi (strain ATCC 49188 / DSM 6882 / CCUG 24695 / JCM 21032 / LMG 3331 / NBRC 15819 / NCTC 12168 / Alc 37) (Ochrobactrum anthropi)).